The sequence spans 355 residues: Beta-ketoacyl-[acyl-carrier-protein] synthase III 1 (355 aa).

Active-site residues include cysteine 122 and histidine 280. Residues 281–285 (QANER) form an ACP-binding region. Residue asparagine 311 is part of the active site.

Belongs to the thiolase-like superfamily. FabH family. As to quaternary structure, homodimer.

It localises to the cytoplasm. The catalysed reaction is malonyl-[ACP] + acetyl-CoA + H(+) = 3-oxobutanoyl-[ACP] + CO2 + CoA. It functions in the pathway lipid metabolism; fatty acid biosynthesis. In terms of biological role, catalyzes the condensation reaction of fatty acid synthesis by the addition to an acyl acceptor of two carbons from malonyl-ACP. Catalyzes the first condensation reaction which initiates fatty acid synthesis and may therefore play a role in governing the total rate of fatty acid production. Possesses both acetoacetyl-ACP synthase and acetyl transacylase activities. Its substrate specificity determines the biosynthesis of branched-chain and/or straight-chain of fatty acids. This is Beta-ketoacyl-[acyl-carrier-protein] synthase III 1 from Streptomyces avermitilis (strain ATCC 31267 / DSM 46492 / JCM 5070 / NBRC 14893 / NCIMB 12804 / NRRL 8165 / MA-4680).